Consider the following 90-residue polypeptide: Large ribosomal subunit protein eL37 (90 aa).

Zn(2+) contacts are provided by Cys-19, Cys-22, Cys-34, and Cys-37. The segment at 19–37 (CRRCGRQSYHKQKNSCSSC) adopts a C4-type zinc-finger fold. Basic residues predominate over residues 21–31 (RCGRQSYHKQK). The disordered stretch occupies residues 21–59 (RCGRQSYHKQKNSCSSCGYPNPKMRNPGSIKARRRRTIG).

Belongs to the eukaryotic ribosomal protein eL37 family. Requires Zn(2+) as cofactor.

Functionally, binds to the 23S rRNA. The sequence is that of Large ribosomal subunit protein eL37 (RPL37) from Encephalitozoon cuniculi (strain GB-M1) (Microsporidian parasite).